The chain runs to 179 residues: Large ribosomal subunit protein uL5 (179 aa).

This sequence belongs to the universal ribosomal protein uL5 family. As to quaternary structure, part of the 50S ribosomal subunit; part of the 5S rRNA/L5/L18/L25 subcomplex. Contacts the 5S rRNA and the P site tRNA. Forms a bridge to the 30S subunit in the 70S ribosome.

In terms of biological role, this is one of the proteins that bind and probably mediate the attachment of the 5S RNA into the large ribosomal subunit, where it forms part of the central protuberance. In the 70S ribosome it contacts protein S13 of the 30S subunit (bridge B1b), connecting the 2 subunits; this bridge is implicated in subunit movement. Contacts the P site tRNA; the 5S rRNA and some of its associated proteins might help stabilize positioning of ribosome-bound tRNAs. The polypeptide is Large ribosomal subunit protein uL5 (Clostridium beijerinckii (strain ATCC 51743 / NCIMB 8052) (Clostridium acetobutylicum)).